A 147-amino-acid chain; its full sequence is Putative 2'-deoxynucleoside 5'-phosphate N-hydrolase 1 (147 aa).

Substrate is bound by residues 10–16 (YFCGSIR), tyrosine 25, histidine 42, glutamate 90, and 114–116 (SAM).

It belongs to the 2'-deoxynucleoside 5'-phosphate N-hydrolase 1 family. As to quaternary structure, monomer and homodimer.

It localises to the cytoplasm. The protein resides in the nucleus. The catalysed reaction is a pyrimidine 2'-deoxyribonucleoside 5'-phosphate + H2O = a pyrimidine nucleobase + 2-deoxy-D-ribose 5-phosphate. It catalyses the reaction a purine 2'-deoxyribonucleoside 5'-phosphate + H2O = a purine nucleobase + 2-deoxy-D-ribose 5-phosphate. Its function is as follows. Catalyzes the cleavage of the N-glycosidic bond of deoxyribonucleoside 5'-monophosphates to yield deoxyribose 5-phosphate and a purine or pyrimidine base. The chain is Putative 2'-deoxynucleoside 5'-phosphate N-hydrolase 1 from Nematostella vectensis (Starlet sea anemone).